Here is a 413-residue protein sequence, read N- to C-terminus: Gamma-glutamyl phosphate reductase (413 aa).

The protein belongs to the gamma-glutamyl phosphate reductase family.

It is found in the cytoplasm. It carries out the reaction L-glutamate 5-semialdehyde + phosphate + NADP(+) = L-glutamyl 5-phosphate + NADPH + H(+). It functions in the pathway amino-acid biosynthesis; L-proline biosynthesis; L-glutamate 5-semialdehyde from L-glutamate: step 2/2. Its function is as follows. Catalyzes the NADPH-dependent reduction of L-glutamate 5-phosphate into L-glutamate 5-semialdehyde and phosphate. The product spontaneously undergoes cyclization to form 1-pyrroline-5-carboxylate. This Leuconostoc mesenteroides subsp. mesenteroides (strain ATCC 8293 / DSM 20343 / BCRC 11652 / CCM 1803 / JCM 6124 / NCDO 523 / NBRC 100496 / NCIMB 8023 / NCTC 12954 / NRRL B-1118 / 37Y) protein is Gamma-glutamyl phosphate reductase.